The primary structure comprises 45 residues: MEAALLLAKLPEAYQIFDPLVDVLPVIPVFFLLLAFVWQAAVGFR.

A propeptide spanning residues 1 to 8 (MEAALLLA) is cleaved from the precursor. A helical transmembrane segment spans residues 24 to 44 (LPVIPVFFLLLAFVWQAAVGF).

Belongs to the PsbK family. As to quaternary structure, PSII is composed of 1 copy each of membrane proteins PsbA, PsbB, PsbC, PsbD, PsbE, PsbF, PsbH, PsbI, PsbJ, PsbK, PsbL, PsbM, PsbT, PsbX, PsbY, PsbZ, Psb30/Ycf12, peripheral proteins PsbO, CyanoQ (PsbQ), PsbU, PsbV and a large number of cofactors. It forms dimeric complexes.

It is found in the cellular thylakoid membrane. Functionally, one of the components of the core complex of photosystem II (PSII). PSII is a light-driven water:plastoquinone oxidoreductase that uses light energy to abstract electrons from H(2)O, generating O(2) and a proton gradient subsequently used for ATP formation. It consists of a core antenna complex that captures photons, and an electron transfer chain that converts photonic excitation into a charge separation. This Synechococcus elongatus (strain ATCC 33912 / PCC 7942 / FACHB-805) (Anacystis nidulans R2) protein is Photosystem II reaction center protein K.